The sequence spans 214 residues: tRNA (guanine-N(7)-)-methyltransferase (214 aa).

Residues Glu-45, Asp-70, Asn-97, and Asn-119 each coordinate S-adenosyl-L-methionine. Lys-123 provides a ligand contact to substrate. Residues 125-130 are interaction with RNA; it reads RHNKRR. Substrate is bound by residues Asp-155 and 193–196; that span reads TEYE.

The protein belongs to the class I-like SAM-binding methyltransferase superfamily. TrmB family.

It catalyses the reaction guanosine(46) in tRNA + S-adenosyl-L-methionine = N(7)-methylguanosine(46) in tRNA + S-adenosyl-L-homocysteine. It functions in the pathway tRNA modification; N(7)-methylguanine-tRNA biosynthesis. Catalyzes the formation of N(7)-methylguanine at position 46 (m7G46) in tRNA. The chain is tRNA (guanine-N(7)-)-methyltransferase from Clostridium novyi (strain NT).